The following is a 418-amino-acid chain: Serine/threonine-protein kinase Sgk1 (418 aa).

A disordered region spans residues 50–78 (PQEPELLNENSSPPPSPSQQINLGPSSNP). Residues 68 to 78 (QQINLGPSSNP) show a composition bias toward polar residues. The region spanning 85–342 (FQFLKIIGKG…FMEIKNHMFF (258 aa)) is the Protein kinase domain. Residues 91 to 99 (IGKGSFGKV) and lysine 114 each bind ATP. The Proton acceptor role is filled by aspartate 209. The AGC-kinase C-terminal domain occupies 343-418 (SPINWDDLIN…SYAPPMESYL (76 aa)).

This sequence belongs to the protein kinase superfamily. AGC Ser/Thr protein kinase family.

The protein localises to the cytoplasm. The protein resides in the nucleus. It localises to the endoplasmic reticulum. The catalysed reaction is L-seryl-[protein] + ATP = O-phospho-L-seryl-[protein] + ADP + H(+). It carries out the reaction L-threonyl-[protein] + ATP = O-phospho-L-threonyl-[protein] + ADP + H(+). Its function is as follows. Protein kinase that may play an important role in cellular stress response. Plays an important role in activating certain potassium, sodium, and chloride channels, suggesting an involvement in the regulation of processes such as cell survival, neuronal excitability, and renal sodium excretion. This is Serine/threonine-protein kinase Sgk1 (sgk1) from Xenopus tropicalis (Western clawed frog).